The chain runs to 108 residues: uncharacterized protein (108 aa).

The interval 1–23 (MVDELEKNQVQPQETEENKENAL) is disordered.

This is an uncharacterized protein from Ureaplasma parvum serovar 3 (strain ATCC 700970).